A 427-amino-acid chain; its full sequence is Light-independent protochlorophyllide reductase subunit N (427 aa).

Residues cysteine 29, cysteine 54, and cysteine 115 each coordinate [4Fe-4S] cluster.

The protein belongs to the BchN/ChlN family. In terms of assembly, protochlorophyllide reductase is composed of three subunits; BchL, BchN and BchB. Forms a heterotetramer of two BchB and two BchN subunits. Requires [4Fe-4S] cluster as cofactor.

It catalyses the reaction chlorophyllide a + oxidized 2[4Fe-4S]-[ferredoxin] + 2 ADP + 2 phosphate = protochlorophyllide a + reduced 2[4Fe-4S]-[ferredoxin] + 2 ATP + 2 H2O. It participates in porphyrin-containing compound metabolism; bacteriochlorophyll biosynthesis (light-independent). Component of the dark-operative protochlorophyllide reductase (DPOR) that uses Mg-ATP and reduced ferredoxin to reduce ring D of protochlorophyllide (Pchlide) to form chlorophyllide a (Chlide). This reaction is light-independent. The NB-protein (BchN-BchB) is the catalytic component of the complex. The chain is Light-independent protochlorophyllide reductase subunit N from Bradyrhizobium sp. (strain ORS 278).